A 369-amino-acid polypeptide reads, in one-letter code: Mitogen-activated protein kinase 4 (369 aa).

One can recognise a Protein kinase domain in the interval 32 to 319 (YVPIKPIGRG…VTEALEHPYM (288 aa)). Residues 38–46 (IGRGAYGIV) and K61 contribute to the ATP site. D158 (proton acceptor) is an active-site residue. Phosphothreonine is present on T191. Positions 191–193 (TEY) match the TXY motif. Y193 is modified (phosphotyrosine).

The protein belongs to the protein kinase superfamily. CMGC Ser/Thr protein kinase family. MAP kinase subfamily. In terms of processing, dually phosphorylated on Thr-191 and Tyr-193, which activates the enzyme. Expressed in leaves and panicles.

The enzyme catalyses L-seryl-[protein] + ATP = O-phospho-L-seryl-[protein] + ADP + H(+). It carries out the reaction L-threonyl-[protein] + ATP = O-phospho-L-threonyl-[protein] + ADP + H(+). With respect to regulation, activated by threonine and tyrosine phosphorylation. The sequence is that of Mitogen-activated protein kinase 4 (MPK4) from Oryza sativa subsp. japonica (Rice).